Here is a 468-residue protein sequence, read N- to C-terminus: ATP synthase subunit beta (468 aa).

Residue 155 to 162 (GGAGVGKT) participates in ATP binding.

Belongs to the ATPase alpha/beta chains family. In terms of assembly, F-type ATPases have 2 components, CF(1) - the catalytic core - and CF(0) - the membrane proton channel. CF(1) has five subunits: alpha(3), beta(3), gamma(1), delta(1), epsilon(1). CF(0) has three main subunits: a(1), b(2) and c(9-12). The alpha and beta chains form an alternating ring which encloses part of the gamma chain. CF(1) is attached to CF(0) by a central stalk formed by the gamma and epsilon chains, while a peripheral stalk is formed by the delta and b chains.

It localises to the cell membrane. It catalyses the reaction ATP + H2O + 4 H(+)(in) = ADP + phosphate + 5 H(+)(out). In terms of biological role, produces ATP from ADP in the presence of a proton gradient across the membrane. The catalytic sites are hosted primarily by the beta subunits. This chain is ATP synthase subunit beta, found in Streptococcus thermophilus (strain CNRZ 1066).